The primary structure comprises 216 residues: U1 small nuclear ribonucleoprotein C (216 aa).

A Matrin-type zinc finger spans residues 4–36; it reads FFCDYCDVYLTHDSMSVRKAHNSGRNHLRNVVD. Disordered regions lie at residues 70–89 and 125–216; these read PQNQPGGVPPGLGFPPPGAG and PGGI…ADKR. Composition is skewed to pro residues over residues 140-149 and 157-204; these read PPMPPFPGMP and GVPP…PPFG.

The protein belongs to the U1 small nuclear ribonucleoprotein C family. In terms of assembly, U1 snRNP is composed of the 7 core Sm proteins B/B', D1, D2, D3, E, F and G that assemble in a heptameric protein ring on the Sm site of the small nuclear RNA to form the core snRNP, and at least 3 U1 snRNP-specific proteins U1-70K, U1-A and U1-C. U1-C interacts with U1 snRNA and the 5' splice-site region of the pre-mRNA.

It is found in the nucleus. Component of the spliceosomal U1 snRNP, which is essential for recognition of the pre-mRNA 5' splice-site and the subsequent assembly of the spliceosome. U1-C is directly involved in initial 5' splice-site recognition for both constitutive and regulated alternative splicing. The interaction with the 5' splice-site seems to precede base-pairing between the pre-mRNA and the U1 snRNA. Stimulates commitment or early (E) complex formation by stabilizing the base pairing of the 5' end of the U1 snRNA and the 5' splice-site region. The protein is U1 small nuclear ribonucleoprotein C of Neurospora crassa (strain ATCC 24698 / 74-OR23-1A / CBS 708.71 / DSM 1257 / FGSC 987).